The following is a 489-amino-acid chain: Protein K15 (489 aa).

The signal sequence occupies residues 1 to 26; the sequence is MKTLIFFWNLWLWALLVCFWCITLVC. Transmembrane regions (helical) follow at residues 29 to 49, 63 to 83, 89 to 109, 121 to 141, 148 to 168, 175 to 195, 200 to 220, 237 to 257, 264 to 284, 296 to 316, and 324 to 344; these read TNSIDTMASLLVMCILFVSAI, WPSSWHLGIIACIVLKLWNLS, TYACLITTAILSLVTAFLTLI, HGILFTSTFAVLMTNMLVHMS, WIFFPISFTLSLPFLYAFATV, LVSSVSFICAGLVMGYPVSCC, CTATAAGLSLSSIYLGFTGII, FLLLQGGVLTTQTLTTELLAI, IKGHEILLLVCLIFLWCLYVW, MLHLIAAWSHTGGCVQLVMLL, and ILTMIICISTLFSTLQGLLVF.

In terms of assembly, interacts with host LYN; this interaction modulates B-cells signaling. Interacts with host ITSN2.

The protein resides in the host cell membrane. The protein localises to the host Golgi apparatus. It is found in the host trans-Golgi network. Functionally, plays a crucial role for reactivation of the virus from latency, early viral gene expression and virus production. Modulates host signaling pathways including activation of MAP kinases c-JUN-N-terminal kinase (JNK), ERK2, and NF-kappa-B resulting in the activation of AP-1 and NFAT-dependent gene expression in B-lymphocytes. When expressed in epithelial cells, induces the expression of several inflammatory and angiogenic genes. Also interferes with B-lymphocytes signaling through interaction with host LYN kinase. In Human herpesvirus 8 type P (isolate GK18) (HHV-8), this protein is Protein K15 (K15).